The sequence spans 395 residues: Choline/ethanolamine kinase (395 aa).

Alanine 2 is subject to N-acetylalanine. ATP contacts are provided by residues serine 75 to leucine 81, arginine 104, glutamine 146 to proline 152, glutamine 244, and aspartate 264. Glycine 77–serine 79 provides a ligand contact to phosphocholine.

The protein belongs to the choline/ethanolamine kinase family. As to quaternary structure, homodimer, and heterodimer with CHKA.

The enzyme catalyses choline + ATP = phosphocholine + ADP + H(+). It catalyses the reaction ethanolamine + ATP = phosphoethanolamine + ADP + H(+). Its pathway is phospholipid metabolism; phosphatidylethanolamine biosynthesis; phosphatidylethanolamine from ethanolamine: step 1/3. Functionally, has a key role in phospholipid metabolism, and catalyzes the first step of phosphatidylethanolamine and phosphatidylcholine biosynthesis. This is Choline/ethanolamine kinase (CHKB) from Homo sapiens (Human).